The following is a 332-amino-acid chain: NAD-dependent protein deacetylase hst2 (332 aa).

The 263-residue stretch at 7 to 269 (KHVDSSKHLE…RALCKLLGWS (263 aa)) folds into the Deacetylase sirtuin-type domain. NAD(+) is bound by residues 35–55 (GAGISTAAGIPDFRSPETGIY) and 118–121 (QNID). Residue His138 is the Proton acceptor of the active site. Zn(2+) contacts are provided by Cys146, Cys149, Cys170, and Cys173. Residues 210–212 (GTS), 235–237 (NRE), and Cys255 contribute to the NAD(+) site.

The protein belongs to the sirtuin family. Class I subfamily. Zn(2+) is required as a cofactor.

It is found in the cytoplasm. It localises to the nucleus. It catalyses the reaction N(6)-acetyl-L-lysyl-[protein] + NAD(+) + H2O = 2''-O-acetyl-ADP-D-ribose + nicotinamide + L-lysyl-[protein]. Its function is as follows. NAD-dependent histone deacetylase, which could function in telomeric silencing, cell cycle progression and chromosome stability. This is NAD-dependent protein deacetylase hst2 (hst2) from Schizosaccharomyces pombe (strain 972 / ATCC 24843) (Fission yeast).